Consider the following 127-residue polypeptide: RxLR effector protein SFI3 (127 aa).

The N-terminal stretch at 1–20 (MRFLLVAVVAMMALVSSSTA) is a signal peptide. The short motif at 40–62 (RSLRNTEERSIAAILAEAGEEDR) is the RxLR-dEER element. The interval 72 to 107 (WYKAKLTPTQVKTVLGVSQAEMNNVAKQLQRLYLGY) is WY-domain.

The protein belongs to the RxLR effector family. In terms of assembly, forms an unusual trans-homodimer. Interacts with host UBK.

It is found in the secreted. The protein resides in the host nucleus. The protein localises to the host nucleolus. Its function is as follows. Effector that suppresses flg22-induced post-translational MAP kinase activation in potato and tomato, but not in Arabidopsis. The perception of highly conserved pathogen- or microbe-associated molecular patterns (PAMPs/MAMPs), such as flg22, triggers converging signaling pathways recruiting MAP kinase cascades and inducing transcriptional re-programming, yielding a generic antimicrobial response. Does not suppress programmed cell death triggered by the P.infestans elicitin infestin-1 (INF1), or by co-expression of tomato Cf4 with Cladosporium fulvum Avr4. Suppresses early pattern-triggered immunity (PTI) via interaction with the U-box-kinase protein UBK, a positive regulator of specific PTI pathways in both potato and Nicotiana benthamiana. The protein is RxLR effector protein SFI3 of Phytophthora infestans (strain T30-4) (Potato late blight agent).